The following is a 250-amino-acid chain: Aminoglycoside 3'-phosphotransferase (250 aa).

D178 serves as the catalytic Proton acceptor.

The protein belongs to the aminoglycoside phosphotransferase family.

The catalysed reaction is kanamycin A + ATP = kanamycin 3'-phosphate + ADP + H(+). Functionally, resistance to kanamycin and structurally-related aminoglycosides, including amikacin. The sequence is that of Aminoglycoside 3'-phosphotransferase (aphA-7) from Campylobacter jejuni.